The following is a 121-amino-acid chain: Large ribosomal subunit protein uL18 (121 aa).

The protein belongs to the universal ribosomal protein uL18 family. In terms of assembly, part of the 50S ribosomal subunit; part of the 5S rRNA/L5/L18/L25 subcomplex. Contacts the 5S and 23S rRNAs.

In terms of biological role, this is one of the proteins that bind and probably mediate the attachment of the 5S RNA into the large ribosomal subunit, where it forms part of the central protuberance. This chain is Large ribosomal subunit protein uL18, found in Acidovorax ebreus (strain TPSY) (Diaphorobacter sp. (strain TPSY)).